Here is a 266-residue protein sequence, read N- to C-terminus: F-box only protein 50 (266 aa).

The segment covering 1-16 has biased composition (basic and acidic residues); the sequence is MEKTQDRDTLSGRMEA. The interval 1-53 is disordered; that stretch reads MEKTQDRDTLSGRMEAEGSLNSEELPPHPQSPPPPPSPRSPTSPVTPELPQPN. Residues 27 to 41 are compositionally biased toward pro residues; it reads PHPQSPPPPPSPRSP. Phosphoserine occurs at positions 31, 37, 40, and 43. A Phosphothreonine modification is found at threonine 46. In terms of domain architecture, FBA spans 86-264; that stretch reads LFLERPLYRN…VTDSSVSVQL (179 aa).

Strongly expressed in kidney. Weakly expressed in stomach, colon, duodenum and prostate.

It localises to the cytoplasm. In terms of biological role, promotes cell proliferation. This is F-box only protein 50 (Nccrp1) from Mus musculus (Mouse).